We begin with the raw amino-acid sequence, 555 residues long: MTKFVFVTGGVVSSLGKGIASASLAAILESRGLKVTLIKLDPYLNVDPGTMSPFQHGEVFVTNDGAETDLDLGHYERFVETRMRKANNFTTGQIYKSVLEKERRGDYLGKTVQVIPHVTNEIQDFVKRGAGWGTPDAVDVAIVEIGGTVGDIESLPFLEAVRQMSLKLGPNNSAFVHLSYVPWIAAAGELKTKPTQHTAKQLREIGIQADALLCRADRPIPKEEREKISLFSNVPDWAVISMWDVDTIYKVPRMLHEQGLDGLICDKLRLSTPPANLKRWDDLVYETAHPQGDVNIVMVGKYVELSDSYKSLNEAIRHAGMKNHVRVKIDYIDSETITPDNVTQLAKFDAILVPGGFGIRGVEGKICAARFARENKVPYLGICLGMQVATIEFARHVAGLKDANSTEFDPSSPNPVIALITEWKDADGSIKTRDENSDLGGTMRLGAQSSDVVKGTLAHKIYGDVVTERHRHRYEANVHFLDTLRKAGLVISAFTQREHLTEIVELPQSVHPWFMGVQFHPEFNSTPWAGHPLFIAFIKAALDHQAAGKALKAVA.

Residues 1-270 (MTKFVFVTGG…DGLICDKLRL (270 aa)) are amidoligase domain. Residue serine 13 participates in CTP binding. Position 13 (serine 13) interacts with UTP. Residues 14-19 (SLGKGI) and aspartate 71 each bind ATP. Mg(2+) contacts are provided by aspartate 71 and glutamate 144. CTP-binding positions include 151-153 (DIE), 191-196 (KTKPTQ), and lysine 227. Residues 191–196 (KTKPTQ) and lysine 227 contribute to the UTP site. The Glutamine amidotransferase type-1 domain occupies 295–547 (NIVMVGKYVE…IKAALDHQAA (253 aa)). Glycine 356 contacts L-glutamine. Cysteine 383 acts as the Nucleophile; for glutamine hydrolysis in catalysis. Residues 384–387 (LGMQ), glutamate 407, and arginine 473 each bind L-glutamine. Active-site residues include histidine 520 and glutamate 522.

Belongs to the CTP synthase family. In terms of assembly, homotetramer.

The enzyme catalyses UTP + L-glutamine + ATP + H2O = CTP + L-glutamate + ADP + phosphate + 2 H(+). The catalysed reaction is L-glutamine + H2O = L-glutamate + NH4(+). It carries out the reaction UTP + NH4(+) + ATP = CTP + ADP + phosphate + 2 H(+). It functions in the pathway pyrimidine metabolism; CTP biosynthesis via de novo pathway; CTP from UDP: step 2/2. Allosterically activated by GTP, when glutamine is the substrate; GTP has no effect on the reaction when ammonia is the substrate. The allosteric effector GTP functions by stabilizing the protein conformation that binds the tetrahedral intermediate(s) formed during glutamine hydrolysis. Inhibited by the product CTP, via allosteric rather than competitive inhibition. Functionally, catalyzes the ATP-dependent amination of UTP to CTP with either L-glutamine or ammonia as the source of nitrogen. Regulates intracellular CTP levels through interactions with the four ribonucleotide triphosphates. This is CTP synthase from Albidiferax ferrireducens (strain ATCC BAA-621 / DSM 15236 / T118) (Rhodoferax ferrireducens).